Consider the following 452-residue polypeptide: UPF0210 protein Hore_14430 (452 aa).

This sequence belongs to the UPF0210 family. As to quaternary structure, homodimer.

In Halothermothrix orenii (strain H 168 / OCM 544 / DSM 9562), this protein is UPF0210 protein Hore_14430.